Consider the following 130-residue polypeptide: Methylglyoxal synthase (130 aa).

The region spanning 1-130 is the MGS-like domain; it reads MMTRPRIALI…AELSRVEAQP (130 aa). Residues His12, Lys16, 38-41, and 58-59 contribute to the substrate site; these read TGTT and SG. Catalysis depends on Asp64, which acts as the Proton donor/acceptor. His91 contributes to the substrate binding site.

Belongs to the methylglyoxal synthase family.

The catalysed reaction is dihydroxyacetone phosphate = methylglyoxal + phosphate. Catalyzes the formation of methylglyoxal from dihydroxyacetone phosphate. This Cupriavidus pinatubonensis (strain JMP 134 / LMG 1197) (Cupriavidus necator (strain JMP 134)) protein is Methylglyoxal synthase.